Here is a 79-residue protein sequence, read N- to C-terminus: U-actitoxin-Bgr3d (79 aa).

The first 21 residues, 1 to 21 (MSYERLLCLVLVASFIAASVA), serve as a signal peptide directing secretion. A propeptide spanning residues 22–38 (QHPGDAPRMEDDSSAIQ) is cleaved from the precursor. 3 disulfide bridges follow: Cys44–Cys76, Cys46–Cys69, and Cys59–Cys77.

This sequence belongs to the sea anemone type 3 (BDS) potassium channel toxin family.

It is found in the secreted. The protein localises to the nematocyst. Functionally, potently and selectively inhibits voltage-gated potassium channels Kv11/KCNH/ERG. Acts as a gating-modifier toxin that shifts the voltage-dependence of ERG activation in the positive direction and suppresses its current amplitudes elicited by strong depolarizing pulses that maximally activate the channels. The protein is U-actitoxin-Bgr3d of Bunodosoma granuliferum (Red warty sea anemone).